The following is a 460-amino-acid chain: UDP-N-acetylmuramoylalanine--D-glutamate ligase (460 aa).

117-123 serves as a coordination point for ATP; sequence GTNGKTT.

Belongs to the MurCDEF family.

The protein localises to the cytoplasm. The enzyme catalyses UDP-N-acetyl-alpha-D-muramoyl-L-alanine + D-glutamate + ATP = UDP-N-acetyl-alpha-D-muramoyl-L-alanyl-D-glutamate + ADP + phosphate + H(+). Its pathway is cell wall biogenesis; peptidoglycan biosynthesis. Cell wall formation. Catalyzes the addition of glutamate to the nucleotide precursor UDP-N-acetylmuramoyl-L-alanine (UMA). The sequence is that of UDP-N-acetylmuramoylalanine--D-glutamate ligase from Prochlorococcus marinus (strain MIT 9313).